Consider the following 1249-residue polypeptide: Protein lingerer (1249 aa).

Residues 1–66 (MSTQTRSGGG…VVKAKQPTAE (66 aa)) form a disordered region. Composition is skewed to gly residues over residues 7-30 (SGGG…GAAG) and 38-50 (GSTG…GAGG). The region spanning 84 to 124 (KIQEKIQSLMETTQRSEEEVCCALQECDSDLDRAVIFLLET) is the UBA domain. Disordered stretches follow at residues 132-312 (TTSK…LKPE), 350-375 (SAGA…ASNV), 454-506 (MPPM…PPTT), 549-579 (YAAA…AVEM), 616-717 (TTGT…TSVS), 738-922 (PYGQ…SLPI), 1016-1042 (GRFT…TGSG), 1124-1149 (QQQS…APSM), 1164-1186 (KQSF…AGTT), and 1211-1249 (QNMH…TGPN). The span at 186–209 (NRGGSGNQRSGGPGRGGRAGGYRD) shows a compositional bias: gly residues. Over residues 210 to 227 (GGGDRDRDRDRNGYDKGG) the composition is skewed to basic and acidic residues. 2 stretches are compositionally biased toward gly residues: residues 228–240 (EGGG…GGDG) and 248–269 (DGPG…GGPR). Low complexity predominate over residues 350-369 (SAGAGAQQQQSQQSTQTGVP). Residues 457–494 (MNTSSSLSAEQSQYFSTLSSQNSNLQPTPSAVGFQQQP) are compositionally biased toward polar residues. 3 stretches are compositionally biased toward low complexity: residues 549–559 (YAAAATQQPPV), 616–639 (TTGT…PATV), and 647–664 (QSQL…APQQ). Over residues 678–705 (ASSQIMPGQGTTEALSSQNDGLANSYSR) the composition is skewed to polar residues. Residues 706 to 717 (TNASGSVSTSVS) show a composition bias toward low complexity. Polar residues-rich tracts occupy residues 738 to 769 (PYGQ…TASY) and 777 to 809 (GYNN…NVNA). A compositionally biased stretch (low complexity) spans 811-861 (QPPSSSVTNNVVPNNNTGNSVGGVSNQSNLPVNNNAVNSSSNNNAGGYLSS). The segment covering 862 to 873 (QYPVSQTSSAFP) has biased composition (polar residues). Composition is skewed to low complexity over residues 874-884 (SQQNYQNSSQN), 892-922 (NSNT…SLPI), and 1023-1034 (NNSSPVSNVPSS). A compositionally biased stretch (polar residues) spans 1124–1138 (QQQSKGQTVANQQSG). Polar residues predominate over residues 1216–1249 (DSNSSGQRPQNNNQGKTASKQQGYSASTYWTGPN).

It localises to the cytoplasm. In terms of biological role, acts in the nervous system to mediate the control of copulatory organs during courtship. The chain is Protein lingerer from Anopheles gambiae (African malaria mosquito).